Reading from the N-terminus, the 360-residue chain is uncharacterized protein (360 aa).

The region spanning 4–235 is the ABC transporter domain; that stretch reads LSLQHIQKIY…PANMFVSGFI (232 aa). 37–44 is a binding site for ATP; sequence GPSGCGKS.

The protein belongs to the ABC transporter superfamily.

This is an uncharacterized protein from Escherichia coli (strain K12).